The chain runs to 358 residues: Aromatic amino acid aminotransferase (358 aa).

Residue K214 is modified to N6-(pyridoxal phosphate)lysine.

Belongs to the class-II pyridoxal-phosphate-dependent aminotransferase family. In terms of assembly, homodimer. The cofactor is pyridoxal 5'-phosphate.

The catalysed reaction is an aromatic L-alpha-amino acid + 2-oxoglutarate = an aromatic oxo-acid + L-glutamate. Functionally, aminotransferase that catalyzes the conversion of aromatic amino acids and 2-oxoglutarate into corresponding aromatic oxo acids and L-glutamate. This is Aromatic amino acid aminotransferase from Rhodococcus erythropolis (strain PR4 / NBRC 100887).